The following is a 716-amino-acid chain: Probable basic-leucine zipper transcription factor O (716 aa).

Positions 20–142 form a coiled coil; sequence LLDDFSQLQQ…YQQRQQQYQD (123 aa). The segment at 173-233 is disordered; it reads SINYNMNNNN…NNKTTDNINN (61 aa). Residues 381–444 enclose the bZIP domain; that stretch reads KSTESIKKMN…SVDLMKPSND (64 aa). The segment at 387–403 is basic motif; sequence KKMNQNKASRNYRQKKK. Residues 406–413 are leucine-zipper; sequence IKEIEDKL.

Belongs to the bZIP family.

It is found in the nucleus. In terms of biological role, probable transcriptional regulator. This Dictyostelium discoideum (Social amoeba) protein is Probable basic-leucine zipper transcription factor O (bzpO).